The following is a 214-amino-acid chain: UPF0502 protein Pput_3252 (214 aa).

Belongs to the UPF0502 family.

This is UPF0502 protein Pput_3252 from Pseudomonas putida (strain ATCC 700007 / DSM 6899 / JCM 31910 / BCRC 17059 / LMG 24140 / F1).